Reading from the N-terminus, the 132-residue chain is Small ribosomal subunit protein uS8 (132 aa).

This sequence belongs to the universal ribosomal protein uS8 family. As to quaternary structure, part of the 30S ribosomal subunit. Contacts proteins S5 and S12.

Functionally, one of the primary rRNA binding proteins, it binds directly to 16S rRNA central domain where it helps coordinate assembly of the platform of the 30S subunit. The chain is Small ribosomal subunit protein uS8 from Xanthomonas axonopodis pv. citri (strain 306).